The following is a 257-amino-acid chain: Neurotrophin-3 (257 aa).

The signal sequence occupies residues Met1–Gly18. Positions Asn19 to Arg138 are excised as a propeptide. The tract at residues Ser61–Ala81 is disordered. Over residues Glu67 to Gly76 the composition is skewed to basic and acidic residues. Residue Asn131 is glycosylated (N-linked (GlcNAc...) asparagine). 3 cysteine pairs are disulfide-bonded: Cys152/Cys217, Cys195/Cys246, and Cys205/Cys248.

It belongs to the NGF-beta family. As to expression, brain and peripheral tissues.

Its subcellular location is the secreted. Its function is as follows. Seems to promote the survival of visceral and proprioceptive sensory neurons. This Homo sapiens (Human) protein is Neurotrophin-3 (NTF3).